We begin with the raw amino-acid sequence, 245 residues long: Small ribosomal subunit protein uS3 (245 aa).

The KH type-2 domain occupies 21–92; sequence LNEFLTRELA…SVELYAEKVA (72 aa). The disordered stretch occupies residues 215–245; that stretch reads EEILPTTPVSEQKGAKPEVPVMPQGAPVPTA.

This sequence belongs to the universal ribosomal protein uS3 family.

It localises to the cytoplasm. The protein localises to the nucleus. It is found in the nucleolus. Its subcellular location is the mitochondrion inner membrane. The protein resides in the cytoskeleton. It localises to the spindle. The enzyme catalyses 2'-deoxyribonucleotide-(2'-deoxyribose 5'-phosphate)-2'-deoxyribonucleotide-DNA = a 3'-end 2'-deoxyribonucleotide-(2,3-dehydro-2,3-deoxyribose 5'-phosphate)-DNA + a 5'-end 5'-phospho-2'-deoxyribonucleoside-DNA + H(+). In terms of biological role, component of the small ribosomal subunit. The ribosome is a large ribonucleoprotein complex responsible for the synthesis of proteins in the cell. Has endonuclease activity and plays a role in repair of damaged DNA. Also involved in other processes including regulation of transcription, translation of its cognate mRNA, spindle formation and chromosome movement during mitosis, and apoptosis. In Ictalurus punctatus (Channel catfish), this protein is Small ribosomal subunit protein uS3 (rps3).